The following is a 460-amino-acid chain: Methylenetetrahydrofolate--tRNA-(uracil-5-)-methyltransferase TrmFO (460 aa).

12–17 (GGGLAG) contributes to the FAD binding site.

It belongs to the MnmG family. TrmFO subfamily. FAD serves as cofactor.

The protein resides in the cytoplasm. The enzyme catalyses uridine(54) in tRNA + (6R)-5,10-methylene-5,6,7,8-tetrahydrofolate + NADH + H(+) = 5-methyluridine(54) in tRNA + (6S)-5,6,7,8-tetrahydrofolate + NAD(+). It carries out the reaction uridine(54) in tRNA + (6R)-5,10-methylene-5,6,7,8-tetrahydrofolate + NADPH + H(+) = 5-methyluridine(54) in tRNA + (6S)-5,6,7,8-tetrahydrofolate + NADP(+). Its function is as follows. Catalyzes the folate-dependent formation of 5-methyl-uridine at position 54 (M-5-U54) in all tRNAs. This is Methylenetetrahydrofolate--tRNA-(uracil-5-)-methyltransferase TrmFO from Crocosphaera subtropica (strain ATCC 51142 / BH68) (Cyanothece sp. (strain ATCC 51142)).